The following is a 158-amino-acid chain: 6,7-dimethyl-8-ribityllumazine synthase (158 aa).

5-amino-6-(D-ribitylamino)uracil-binding positions include phenylalanine 23, 61-63 (SFE), and 85-87 (AVI). 90–91 (DT) contributes to the (2S)-2-hydroxy-3-oxobutyl phosphate binding site. The active-site Proton donor is histidine 93. Phenylalanine 118 lines the 5-amino-6-(D-ribitylamino)uracil pocket. (2S)-2-hydroxy-3-oxobutyl phosphate is bound at residue arginine 132.

Belongs to the DMRL synthase family.

The catalysed reaction is (2S)-2-hydroxy-3-oxobutyl phosphate + 5-amino-6-(D-ribitylamino)uracil = 6,7-dimethyl-8-(1-D-ribityl)lumazine + phosphate + 2 H2O + H(+). It participates in cofactor biosynthesis; riboflavin biosynthesis; riboflavin from 2-hydroxy-3-oxobutyl phosphate and 5-amino-6-(D-ribitylamino)uracil: step 1/2. In terms of biological role, catalyzes the formation of 6,7-dimethyl-8-ribityllumazine by condensation of 5-amino-6-(D-ribitylamino)uracil with 3,4-dihydroxy-2-butanone 4-phosphate. This is the penultimate step in the biosynthesis of riboflavin. The sequence is that of 6,7-dimethyl-8-ribityllumazine synthase from Prochlorococcus marinus (strain NATL1A).